Here is a 198-residue protein sequence, read N- to C-terminus: Probable nicotinate-nucleotide adenylyltransferase (198 aa).

Belongs to the NadD family.

The catalysed reaction is nicotinate beta-D-ribonucleotide + ATP + H(+) = deamido-NAD(+) + diphosphate. The protein operates within cofactor biosynthesis; NAD(+) biosynthesis; deamido-NAD(+) from nicotinate D-ribonucleotide: step 1/1. Functionally, catalyzes the reversible adenylation of nicotinate mononucleotide (NaMN) to nicotinic acid adenine dinucleotide (NaAD). This is Probable nicotinate-nucleotide adenylyltransferase from Chlorobium phaeobacteroides (strain BS1).